The following is a 79-amino-acid chain: Apolipoprotein C-II (79 aa).

The signal sequence occupies residues 1–21; it reads MDLKVVAVSFLLLVLCSEAAG. Residues 45–52 form a lipid binding region; sequence GVEKLRDI. The interval 56-79 is lipoprotein lipase cofactor; that stretch reads SVDAVGTYTSILTDQLYHWWCGEQ.

This sequence belongs to the apolipoprotein C2 family. In terms of processing, proapolipoprotein C-II is synthesized as a sialic acid containing glycoprotein which is subsequently desialylated prior to its proteolytic processing. Proapolipoprotein C-II, the major form found in plasma undergoes proteolytic cleavage of its N-terminal hexapeptide to generate apolipoprotein C-II, which occurs as the minor form in plasma.

It is found in the secreted. Its function is as follows. Component of chylomicrons, very low-density lipoproteins (VLDL), low-density lipoproteins (LDL), and high-density lipoproteins (HDL) in plasma. Plays an important role in lipoprotein metabolism as an activator of lipoprotein lipase. Both proapolipoprotein C-II and apolipoprotein C-II can activate lipoprotein lipase. This chain is Apolipoprotein C-II (APOC2), found in Alligator mississippiensis (American alligator).